A 74-amino-acid chain; its full sequence is Protein krueppel (74 aa).

C2H2-type zinc fingers lie at residues 1–4 (ERTH), 10–32 (FECP…MRLH), 38–60 (YHCS…LRVH), and 66–74 (YTCEICDGK).

This sequence belongs to the krueppel C2H2-type zinc-finger protein family.

It is found in the nucleus. Krueppel is a gap class segmentation protein. This Musca domestica (House fly) protein is Protein krueppel (Kr).